A 92-amino-acid polypeptide reads, in one-letter code: Acylphosphatase (92 aa).

The Acylphosphatase-like domain occupies 5 to 92; it reads ATAAYVYGVV…TDYKGFTIRY (88 aa). Active-site residues include arginine 20 and asparagine 38.

It belongs to the acylphosphatase family.

The enzyme catalyses an acyl phosphate + H2O = a carboxylate + phosphate + H(+). This Pectobacterium atrosepticum (strain SCRI 1043 / ATCC BAA-672) (Erwinia carotovora subsp. atroseptica) protein is Acylphosphatase (acyP).